Reading from the N-terminus, the 593-residue chain is MLO-like protein 8 (593 aa).

At 1-46 the chain is on the extracellular side; it reads MGIIDGSLLRRLICLCLWCLLGGGVTVVTAEDEKKVVHKQLNQTPT. Residues 47 to 67 traverse the membrane as a helical segment; sequence WAVAAVCTFFIVVSVLLEKLL. Over 68 to 92 the chain is Cytoplasmic; it reads HKVGKVLWDRHKTALLDALEKIKAE. A helical transmembrane segment spans residues 93–113; sequence LMVLGFISLLLTFGQTYILDI. Residues 114–181 are Extracellular-facing; the sequence is CIPSHVARTM…ISAEALHQLH (68 aa). A helical membrane pass occupies residues 182 to 202; the sequence is ILIFFLAIFHVLYSFLTMMLG. The Cytoplasmic segment spans residues 203–304; it reads RLKIRGWKHW…IKRSLEDDFK (102 aa). A helical membrane pass occupies residues 305 to 325; the sequence is VVVGVSPVLWGSFVLFLLLNI. Aspartate 326 is a topological domain (extracellular). Residues 327–347 traverse the membrane as a helical segment; the sequence is GFKMMFIGTAIPVIIILAVGT. The Cytoplasmic segment spans residues 348-393; sequence KLQAIMTRMALGITDRHAVVQGMPLVQGNDEYFWFGRPHLILHLMH. A helical transmembrane segment spans residues 394-414; it reads FALFQNAFQITYFFWIWYSFG. Residues 415-430 are Extracellular-facing; the sequence is SDSCYHPNFKIALVKV. The helical transmembrane segment at 431–451 threads the bilayer; that stretch reads AIALGVLCLCSYITLPLYALV. At 452–593 the chain is on the cytoplasmic side; the sequence is TQMGSRMKKS…APSNESSQDR (142 aa). A calmodulin-binding region spans residues 465–486; it reads EQTSKALKKWRMAVKKKKGVKA. A disordered region spans residues 481–593; it reads KKGVKATTKR…APSNESSQDR (113 aa). Positions 489–512 are enriched in low complexity; it reads KRLGGDGSASPTASTVRSTSSVRS. Over residues 528–539 the composition is skewed to acidic residues; that stretch reads LDPETSDLDTDN. A compositionally biased stretch (basic and acidic residues) spans 567-579; it reads TSRDTETDSKEFS.

This sequence belongs to the MLO family.

It is found in the membrane. In terms of biological role, may be involved in modulation of pathogen defense and leaf cell death. Activity seems to be regulated by Ca(2+)-dependent calmodulin binding and seems not to require heterotrimeric G proteins. This chain is MLO-like protein 8 (MLO8), found in Arabidopsis thaliana (Mouse-ear cress).